Reading from the N-terminus, the 143-residue chain is SsrA-binding protein (143 aa).

It belongs to the SmpB family.

Its subcellular location is the cytoplasm. Its function is as follows. Required for rescue of stalled ribosomes mediated by trans-translation. Binds to transfer-messenger RNA (tmRNA), required for stable association of tmRNA with ribosomes. tmRNA and SmpB together mimic tRNA shape, replacing the anticodon stem-loop with SmpB. tmRNA is encoded by the ssrA gene; the 2 termini fold to resemble tRNA(Ala) and it encodes a 'tag peptide', a short internal open reading frame. During trans-translation Ala-aminoacylated tmRNA acts like a tRNA, entering the A-site of stalled ribosomes, displacing the stalled mRNA. The ribosome then switches to translate the ORF on the tmRNA; the nascent peptide is terminated with the 'tag peptide' encoded by the tmRNA and targeted for degradation. The ribosome is freed to recommence translation, which seems to be the essential function of trans-translation. The sequence is that of SsrA-binding protein from Deinococcus radiodurans (strain ATCC 13939 / DSM 20539 / JCM 16871 / CCUG 27074 / LMG 4051 / NBRC 15346 / NCIMB 9279 / VKM B-1422 / R1).